The primary structure comprises 177 residues: Large ribosomal subunit protein uL6 (177 aa).

Belongs to the universal ribosomal protein uL6 family. In terms of assembly, part of the 50S ribosomal subunit.

Functionally, this protein binds to the 23S rRNA, and is important in its secondary structure. It is located near the subunit interface in the base of the L7/L12 stalk, and near the tRNA binding site of the peptidyltransferase center. The chain is Large ribosomal subunit protein uL6 from Aliivibrio fischeri (strain MJ11) (Vibrio fischeri).